The chain runs to 238 residues: Ribosomal RNA small subunit methyltransferase G (238 aa).

Residues glycine 75, leucine 80, 126 to 127 (AE), and arginine 142 contribute to the S-adenosyl-L-methionine site.

The protein belongs to the methyltransferase superfamily. RNA methyltransferase RsmG family.

It is found in the cytoplasm. In terms of biological role, specifically methylates the N7 position of guanine in position 518 of 16S rRNA. The polypeptide is Ribosomal RNA small subunit methyltransferase G (Streptomyces avermitilis (strain ATCC 31267 / DSM 46492 / JCM 5070 / NBRC 14893 / NCIMB 12804 / NRRL 8165 / MA-4680)).